Here is a 570-residue protein sequence, read N- to C-terminus: CDKN2A-interacting protein (570 aa).

An N-acetylalanine modification is found at Ala-2. The XRN2-binding (XTBD) domain occupies 19-126 (VETLRCEGET…KVKKRGISSS (108 aa)). A disordered region spans residues 122 to 345 (GISSSNEGVE…TSLLMPKSSS (224 aa)). Ser-124 bears the Phosphoserine mark. Residues 147–162 (VERDHGKKSAKTDRSA) show a composition bias toward basic and acidic residues. A compositionally biased stretch (low complexity) spans 167-183 (SSGSKGSSTKSESSGTS). Residue Lys-176 forms a Glycyl lysine isopeptide (Lys-Gly) (interchain with G-Cter in SUMO1) linkage. Residues 184 to 198 (ARSNSGVSHQNSSTS) show a composition bias toward polar residues. Low complexity predominate over residues 203–221 (SVCSQSSSNSSQVTSAGSG). The segment covering 224 to 233 (SEPEAPDKHG) has biased composition (basic and acidic residues). Phosphoserine is present on Ser-234. Composition is skewed to low complexity over residues 234-248 (SASF…SLNS) and 271-301 (SSVS…PLLS). Polar residues predominate over residues 302-317 (CKSSSETASSGLTTKA). The span at 318-345 (SSEANISSSVSKNSSSSGTSLLMPKSSS) shows a compositional bias: low complexity. The residue at position 378 (Ser-378) is a Phosphoserine. The disordered stretch occupies residues 383–407 (SQLASKSSSQSSTSQLPSKSTSQSS). Residues 452–527 (NHGELLNAAI…SREALKLFLK (76 aa)) enclose the DRBM domain.

Belongs to the CARF family. In terms of assembly, interacts with CDKN2A/p14ARF, p53/TP53 and MDM2. Interacts with CHEK2 and MAPK3. Interacts with XRN2. Post-translationally, may be ubiquitinated.

The protein resides in the nucleus. The protein localises to the nucleoplasm. Functionally, regulates DNA damage response and cell proliferation in a dose-dependent manner through a number of signaling pathways involved in cell proliferation, apoptosis and senescence. This Rattus norvegicus (Rat) protein is CDKN2A-interacting protein (Cdkn2aip).